Here is a 416-residue protein sequence, read N- to C-terminus: Multifunctional CCA protein (416 aa).

Residues glycine 8 and arginine 11 each contribute to the ATP site. The CTP site is built by glycine 8 and arginine 11. 2 residues coordinate Mg(2+): aspartate 21 and aspartate 23. Arginine 91, arginine 137, and arginine 140 together coordinate ATP. Arginine 91, arginine 137, and arginine 140 together coordinate CTP. The region spanning 228 to 335 is the HD domain; sequence SFIHTMLVLK…ITLFNRFDVW (108 aa).

It belongs to the tRNA nucleotidyltransferase/poly(A) polymerase family. Bacterial CCA-adding enzyme type 1 subfamily. As to quaternary structure, monomer. Can also form homodimers and oligomers. Requires Mg(2+) as cofactor. Ni(2+) serves as cofactor.

The enzyme catalyses a tRNA precursor + 2 CTP + ATP = a tRNA with a 3' CCA end + 3 diphosphate. It carries out the reaction a tRNA with a 3' CCA end + 2 CTP + ATP = a tRNA with a 3' CCACCA end + 3 diphosphate. Catalyzes the addition and repair of the essential 3'-terminal CCA sequence in tRNAs without using a nucleic acid template. Adds these three nucleotides in the order of C, C, and A to the tRNA nucleotide-73, using CTP and ATP as substrates and producing inorganic pyrophosphate. tRNA 3'-terminal CCA addition is required both for tRNA processing and repair. Also involved in tRNA surveillance by mediating tandem CCA addition to generate a CCACCA at the 3' terminus of unstable tRNAs. While stable tRNAs receive only 3'-terminal CCA, unstable tRNAs are marked with CCACCA and rapidly degraded. This chain is Multifunctional CCA protein, found in Haemophilus influenzae (strain PittGG).